Reading from the N-terminus, the 449-residue chain is UDP-N-acetylmuramoylalanine--D-glutamate ligase (449 aa).

Position 119-125 (119-125 (GSNGKTT)) interacts with ATP.

Belongs to the MurCDEF family.

The protein localises to the cytoplasm. It carries out the reaction UDP-N-acetyl-alpha-D-muramoyl-L-alanine + D-glutamate + ATP = UDP-N-acetyl-alpha-D-muramoyl-L-alanyl-D-glutamate + ADP + phosphate + H(+). The protein operates within cell wall biogenesis; peptidoglycan biosynthesis. Cell wall formation. Catalyzes the addition of glutamate to the nucleotide precursor UDP-N-acetylmuramoyl-L-alanine (UMA). The protein is UDP-N-acetylmuramoylalanine--D-glutamate ligase of Streptococcus suis (strain 98HAH33).